The chain runs to 264 residues: Tryptophan synthase alpha chain (264 aa).

Residues E49 and D60 each act as proton acceptor in the active site.

This sequence belongs to the TrpA family. Tetramer of two alpha and two beta chains.

The catalysed reaction is (1S,2R)-1-C-(indol-3-yl)glycerol 3-phosphate + L-serine = D-glyceraldehyde 3-phosphate + L-tryptophan + H2O. It functions in the pathway amino-acid biosynthesis; L-tryptophan biosynthesis; L-tryptophan from chorismate: step 5/5. The alpha subunit is responsible for the aldol cleavage of indoleglycerol phosphate to indole and glyceraldehyde 3-phosphate. The chain is Tryptophan synthase alpha chain from Laribacter hongkongensis (strain HLHK9).